The sequence spans 274 residues: Protein FRG1 homolog (274 aa).

Residues 20 to 36 (KKNLFKVGKEKKKKNKD) carry the Nuclear localization signal motif. The interval 27 to 46 (GKEKKKKNKDDKEKIDPDTV) is disordered. Positions 34–43 (NKDDKEKIDP) are enriched in basic and acidic residues. The Bipartite nuclear localization signal signature appears at 252-268 (QADGSAHELLLDRRMKM).

Belongs to the FRG1 family.

Its subcellular location is the nucleus. The protein localises to the cajal body. It localises to the nucleolus. It is found in the cytoplasm. Functionally, binds to mRNA in a sequence-independent manner. May play a role in regulation of pre-mRNA splicing or in the assembly of rRNA into ribosomal subunits. May be involved in mRNA transport. May be involved in epigenetic regulation of muscle differentiation through regulation of activity of the histone-lysine N-methyltransferase KMT5B. This chain is Protein FRG1 homolog (frg-1), found in Caenorhabditis elegans.